We begin with the raw amino-acid sequence, 341 residues long: Ribosomal RNA small subunit methyltransferase H (341 aa).

S-adenosyl-L-methionine is bound by residues 47–49 (GGY), Asp64, Phe91, Asp109, and Gln116.

The protein belongs to the methyltransferase superfamily. RsmH family.

The protein resides in the cytoplasm. It carries out the reaction cytidine(1402) in 16S rRNA + S-adenosyl-L-methionine = N(4)-methylcytidine(1402) in 16S rRNA + S-adenosyl-L-homocysteine + H(+). Its function is as follows. Specifically methylates the N4 position of cytidine in position 1402 (C1402) of 16S rRNA. This chain is Ribosomal RNA small subunit methyltransferase H, found in Rhizobium etli (strain ATCC 51251 / DSM 11541 / JCM 21823 / NBRC 15573 / CFN 42).